The primary structure comprises 447 residues: Cysteine--tRNA ligase (447 aa).

Residue Cys-28 coordinates Zn(2+). The 'HIGH' region motif lies at 30–40; that stretch reads PTVYNYIHIGN. Residues Cys-211, His-236, and Glu-240 each coordinate Zn(2+). A 'KMSKS' region motif is present at residues 268–272; it reads KMSKS. Lys-271 is an ATP binding site.

The protein belongs to the class-I aminoacyl-tRNA synthetase family. As to quaternary structure, monomer. Requires Zn(2+) as cofactor.

Its subcellular location is the cytoplasm. The catalysed reaction is tRNA(Cys) + L-cysteine + ATP = L-cysteinyl-tRNA(Cys) + AMP + diphosphate. This is Cysteine--tRNA ligase from Streptococcus pyogenes serotype M28 (strain MGAS6180).